A 193-amino-acid chain; its full sequence is Mediator of RNA polymerase II transcription subunit 20 (193 aa).

It belongs to the Mediator complex subunit 20 family. As to quaternary structure, component of the Mediator complex.

The protein localises to the nucleus. Component of the Mediator complex, a coactivator involved in the regulated transcription of nearly all RNA polymerase II-dependent genes. Mediator functions as a bridge to convey information from gene-specific regulatory proteins to the basal RNA polymerase II transcription machinery. The Mediator complex, having a compact conformation in its free form, is recruited to promoters by direct interactions with regulatory proteins and serves for the assembly of a functional preinitiation complex with RNA polymerase II and the general transcription factors. This is Mediator of RNA polymerase II transcription subunit 20 (med20) from Schizosaccharomyces pombe (strain 972 / ATCC 24843) (Fission yeast).